The primary structure comprises 368 residues: 1-deoxy-D-xylulose 5-phosphate reductoisomerase (368 aa).

Residues Thr-7, Gly-8, Ser-9, Ile-10, Gly-31, Lys-32, Asn-33, and Asn-113 each coordinate NADPH. Lys-114 contacts 1-deoxy-D-xylulose 5-phosphate. Residue Glu-115 coordinates NADPH. Mn(2+) is bound at residue Asp-133. The 1-deoxy-D-xylulose 5-phosphate site is built by Ser-134, Glu-135, Ser-158, and His-181. A Mn(2+)-binding site is contributed by Glu-135. Gly-187 provides a ligand contact to NADPH. Residues Ser-194, Asn-199, Lys-200, and Glu-203 each contribute to the 1-deoxy-D-xylulose 5-phosphate site. Glu-203 is a binding site for Mn(2+).

It belongs to the DXR family. Requires Mg(2+) as cofactor. It depends on Mn(2+) as a cofactor.

The enzyme catalyses 2-C-methyl-D-erythritol 4-phosphate + NADP(+) = 1-deoxy-D-xylulose 5-phosphate + NADPH + H(+). The protein operates within isoprenoid biosynthesis; isopentenyl diphosphate biosynthesis via DXP pathway; isopentenyl diphosphate from 1-deoxy-D-xylulose 5-phosphate: step 1/6. Its function is as follows. Catalyzes the NADPH-dependent rearrangement and reduction of 1-deoxy-D-xylulose-5-phosphate (DXP) to 2-C-methyl-D-erythritol 4-phosphate (MEP). In Helicobacter pylori (strain ATCC 700392 / 26695) (Campylobacter pylori), this protein is 1-deoxy-D-xylulose 5-phosphate reductoisomerase.